The chain runs to 546 residues: Nuclear pore complex protein Nup58 (546 aa).

17 repeat units span residues 22–23 (FG), 36–37 (FG), 45–46 (FG), 64–65 (FG), 73–74 (FG), 82–83 (FG), 92–93 (FG), 101–102 (FG), 110–111 (FG), 119–120 (FG), 128–129 (FG), 137–138 (FG), 146–147 (FG), 155–156 (FG), 166–167 (FG), 197–198 (FG), and 199–200 (FG). The interval 22–200 (FGARPATTTA…TTAPPAFGFG (179 aa)) is 17 X 2 AA repeats of F-G.

The protein belongs to the NUP58 family. As to quaternary structure, component of the nuclear pore complex. Interacts with Nup54. Interacts (via C-terminus) with fs(1)Yb; this interaction occurs in a RNA-independent manner. Interacts with sbr/nxf1. Interacts with Nxt1. In terms of processing, O-glycosylated; contains O-GlcNAc. O-GlcNAcylation increases with increasing ambient temperature.

The protein localises to the nucleus. The protein resides in the nuclear pore complex. Its function is as follows. Component of the nuclear pore complex, a complex required for the trafficking across the nuclear membrane. Together with Nup54, required for transposable element silencing regulation in ovarian follicle cells. By interacting with the nuclear (Nxf1/Nxt1) and cytosolic (fs(1)Yb) components of the flamenco (flam) transcripts processing pathway, enables export and subsequent piRNA production. The protein is Nuclear pore complex protein Nup58 of Drosophila melanogaster (Fruit fly).